Reading from the N-terminus, the 37-residue chain is U12-myrmicitoxin-Mri1a (37 aa).

Positions methionine 1–glycine 23 are cleaved as a signal peptide. Positions aspartate 24 to proline 25 are excised as a propeptide. At valine 35 the chain carries Valine amide.

As to expression, expressed by the venom gland.

The protein resides in the secreted. Its function is as follows. Toxin that induces mild paralysis, and reduces survival and reproduction when injected into aphids (A.pisum). May affect various processes in the aphid, including wound healing and hemolymph coagulation. It does not increase the sensitivity of the aphids to the chemical insecticides imidacloprid, methomyl and Spirotetramat. Has no insecticidal activity when injected into blowfly (L.caesar). Does not display any antibacterial or antifungal activity. In Manica rubida (European giant red ant), this protein is U12-myrmicitoxin-Mri1a.